The following is a 579-amino-acid chain: Nuclear hormone receptor family member nhr-47 (579 aa).

The segment at residues 8 to 83 (GTLCAVCDDI…VGMDKNSIQN (76 aa)) is a DNA-binding region (nuclear receptor). 2 consecutive NR C4-type zinc fingers follow at residues 11–31 (CAVC…CNGC) and 47–71 (CQGN…LQKC). The tract at residues 87–128 (RIGYTKRKRRHDDNDMEGGVHHSEHIRDGSSGSPQMNDESPE) is disordered. The segment covering 104–114 (GGVHHSEHIRD) has biased composition (basic and acidic residues). The 390-residue stretch at 164–553 (ADLHSYATLE…SLVKETSLGP (390 aa)) folds into the NR LBD domain.

It belongs to the nuclear hormone receptor family.

The protein localises to the nucleus. In terms of biological role, orphan nuclear receptor. In Caenorhabditis elegans, this protein is Nuclear hormone receptor family member nhr-47 (nhr-47).